We begin with the raw amino-acid sequence, 556 residues long: Serine beta-lactamase-like protein LACTB, mitochondrial (556 aa).

The N-terminal 117 residues, 1–117, are a transit peptide targeting the mitochondrion; sequence MYRLLSAVMA…RAIDSSRDLL (117 aa). Residue Ser-166 is the Acyl-ester intermediate of the active site. Positions 249–282 are enriched in basic and acidic residues; the sequence is ESDQEKELKEKGGKSNEKNDFAKAKVEQDNETKG. Residues 249 to 290 are disordered; sequence ESDQEKELKEKGGKSNEKNDFAKAKVEQDNETKGRNSKPCKK. N6-succinyllysine is present on residues Lys-290 and Lys-291. An N6-acetyllysine mark is found at Lys-304 and Lys-349.

Belongs to the peptidase S12 family.

The protein localises to the mitochondrion. In terms of biological role, mitochondrial serine protease that acts as a regulator of mitochondrial lipid metabolism. Acts by decreasing protein levels of PISD, a mitochondrial enzyme that converts phosphatidylserine (PtdSer) to phosphatidylethanolamine (PtdEtn), thereby affecting mitochondrial lipid metabolism. It is unclear whether it acts directly by mediating proteolysis of PISD or by mediating proteolysis of another lipid metabolism protein. In Bos taurus (Bovine), this protein is Serine beta-lactamase-like protein LACTB, mitochondrial.